Consider the following 152-residue polypeptide: Globin-1 subunit beta (152 aa).

S2 bears the N-acetylserine mark. A Globin domain is found at 12–152 (VSNADQKDLL…SLVAVVQAAL (141 aa)). 2 residues coordinate heme b: H72 and H104.

The protein belongs to the globin family. In terms of assembly, heterotetramer of two alpha chains and two beta chains.

The chain is Globin-1 subunit beta from Anadara trapezia (Sydney cockle).